The following is an 808-amino-acid chain: MSVVRPKKVFQTPIDPGVSLRRKKDFYIWAATIGFAQLWRDIKAFKWYRPLQMADLASHYFYIPLGRLDPRILSSAPNDRMLIKTIPHEMSQDYDETGILGCPGREVVNAGSNNYGGFTRFEYGSASVIKLALRNLPFNPAPEELNTLVEREMADYMEADACATAISGYGANLLAFLTVAETAKLSDRQCIFLLDEESHSSMFVGAFLNKEAKFHRFKHNDIADLEYKLRTMKETSPNALVCVAIEGMYSLAGNVAPIPAILALRKVFNFCLLVDEAHSFMAIGCKGRGSFEWWQARGYECPLSEVDIMTATLSKSVGCTGGLVMANKIYASNLQHQARLQREEGDECLSTIVLFRALTLIRKPLFIERRMKTLEEKARYVAERLDEAGCLLLSPPGSPIICFPVGTVQQASNFVAECLKKGFAVACGVPPATPIWSCRVRVCIFATTSWGDILALVNTLIAVSCKLRIDGVQSMKFDTDSLPKVSIKEDIVSDEGNAADLALQEYVEQLAAKYPAEDCRAIAPLNVAQAREVFEYGVQSFEMYGIGASSVRWFYGTFDVFIRLEQRLAGLYPSLISHSGKCRAMLGSDANVMAVSLLSAVAGPMYAKDVLNLVLVPQNAPCYVKKGATLDKVQPSTRVTLYEDLRDLEVEGTKLQKHRYYHVTLYLETVDEDGSILDLSNRIKDILLTLKNAPSLTGLRLILDDSRGLGKIGPRHLGFLDQMESQHGVSFFSTALGPQLAAITTVVVFGSWFHSLNHQGGYVISSEAFTEAHTVSSKSFVFSTPPMIVQAAMSEKTLELLAGGSGLV.

Belongs to the class-II pyridoxal-phosphate-dependent aminotransferase family. BioF subfamily. Requires pyridoxal 5'-phosphate as cofactor.

The protein operates within mycotoxin biosynthesis. Aminotransferase; part of the gene cluster that mediates the biosynthesis of the host-selective toxins (HSTs) AAL-toxins, sphinganine-analog mycotoxins responsible for Alternaria stem canker on tomato by the tomato pathotype. The biosynthesis starts with the polyketide synthase ALT1-catalyzed C-16 carbon chain assembly from one starter acetyl-CoA unit with malonyl-CoA extender units. ALT1 also selectively transfers methyl groups at the first and the third cycle of chain elongation for AAL toxin. The C-16 polyketide chain is released from the enzyme by a nucleophilic attack of a carbanion, which is derived from R-carbon of glycin by decarboxylation, on the carbonyl carbon of polyketide acyl chain. This step is probably catalyzed by a pyridoxal 5'-phosphate-dependent aminoacyl transferase ALT4. The respective functions of the other enzymes encoded by the cluster have still to be elucidated. The sphingosine N-acyltransferase-like protein ALT7 seems not to act as a resistance/self-tolerance factor against the toxin in the toxin biosynthetic gene cluster, contrary to what is expected. This is Aminotransferase ALT4 from Alternaria alternata (Alternaria rot fungus).